A 389-amino-acid polypeptide reads, in one-letter code: S-adenosylmethionine synthase (389 aa).

Residue His19 participates in ATP binding. Asp21 contacts Mg(2+). Residue Glu47 coordinates K(+). Residues Glu60 and Gln103 each coordinate L-methionine. A flexible loop region spans residues 103 to 113 (QSGDIAQGVDR). Residues 168-170 (DGK), 234-235 (RF), Asp243, 249-250 (RK), Ala266, and Lys270 each bind ATP. Asp243 serves as a coordination point for L-methionine. Residue Lys274 participates in L-methionine binding.

The protein belongs to the AdoMet synthase family. Homotetramer; dimer of dimers. Mg(2+) is required as a cofactor. It depends on K(+) as a cofactor.

The protein resides in the cytoplasm. The enzyme catalyses L-methionine + ATP + H2O = S-adenosyl-L-methionine + phosphate + diphosphate. It participates in amino-acid biosynthesis; S-adenosyl-L-methionine biosynthesis; S-adenosyl-L-methionine from L-methionine: step 1/1. In terms of biological role, catalyzes the formation of S-adenosylmethionine (AdoMet) from methionine and ATP. The overall synthetic reaction is composed of two sequential steps, AdoMet formation and the subsequent tripolyphosphate hydrolysis which occurs prior to release of AdoMet from the enzyme. The protein is S-adenosylmethionine synthase of Nitratidesulfovibrio vulgaris (strain DSM 19637 / Miyazaki F) (Desulfovibrio vulgaris).